The sequence spans 170 residues: Cathelicidin antimicrobial peptide (170 aa).

An N-terminal signal peptide occupies residues 1 to 30 (MKTQRDSPSLGRWSLVLLLLGLVMPLAIVA). Residues 31–131 (QVLSYQEAVL…DISCDKDNRR (101 aa)) constitute a propeptide, cathelin-like domain (CLD). 2 disulfides stabilise this stretch: Cys86–Cys97 and Cys108–Cys125. An active core region spans residues 150–162 (LKKVGQKIKDFLG).

Belongs to the cathelicidin family. Monomer, homodimer or homotrimer (in vitro). Oligomerizes as tetra- or hexamer in solution (in vitro). Post-translationally, proteolytically cleaved by proteinase PRTN3 into antibacterial peptide LL-37. Proteolytically cleaved by cathepsin CTSG and neutrophil elastase ELANE. In terms of processing, resistant to proteolytic degradation in solution, and when bound to both zwitterionic (mimicking mammalian membranes) and negatively charged membranes (mimicking bacterial membranes). After secretion onto the skin surface, the CAMP gene product is processed by a serine protease-dependent mechanism into multiple novel antimicrobial peptides distinct from and shorter than cathelicidin LL-37. These peptides show enhanced antimicrobial action, acquiring the ability to kill skin pathogens such as S.aureus, E.coli and C.albicans. These peptides have lost the ability to stimulate CXCL8/IL8 release from keratinocytes. The peptides act synergistically, killing bacteria at lower concentrations when present together, and maintain activity at increased salt condition.

Its subcellular location is the secreted. It is found in the vesicle. Antimicrobial protein that is an integral component of the innate immune system. Binds to bacterial lipopolysaccharides (LPS). Acts via neutrophil N-formyl peptide receptors to enhance the release of CXCL2. Postsecretory processing generates multiple cathelicidin antimicrobial peptides with various lengths which act as a topical antimicrobial defense in sweat on skin. The unprocessed precursor form, cathelicidin antimicrobial peptide, inhibits the growth of Gram-negative E.coli and E.aerogenes with efficiencies comparable to that of the mature peptide LL-37 (in vitro). Its function is as follows. Antimicrobial peptide that is an integral component of the innate immune system. Binds to bacterial lipopolysaccharides (LPS). Causes membrane permeabilization by forming transmembrane pores (in vitro). Causes lysis of E.coli. Exhibits antimicrobial activity against Gram-negative bacteria such as P.aeruginosa, S.typhimurium, E.aerogenes, E.coli and P.syringae, Gram-positive bacteria such as L.monocytogenes, S.epidermidis, S.pyogenes and S.aureus, as well as vancomycin-resistant enterococci (in vitro). Exhibits antimicrobial activity against methicillin-resistant S.aureus, P.mirabilis, and C.albicans in low-salt media, but not in media containing 100 mM NaCl (in vitro). Forms chiral supramolecular assemblies with quinolone signal (PQS) molecules of P.aeruginosa, which may lead to interference of bacterial quorum signaling and perturbance of bacterial biofilm formation. May form supramolecular fiber-like assemblies on bacterial membranes. Induces cytokine and chemokine producation as well as TNF/TNFA and CSF2/GMCSF production in normal human keratinocytes. Exhibits hemolytic activity against red blood cells. In terms of biological role, exhibits antimicrobial activity against E.coli and B.megaterium (in vitro). This chain is Cathelicidin antimicrobial peptide, found in Papio papio (Guinea baboon).